The following is a 162-amino-acid chain: NADH-quinone oxidoreductase subunit I (162 aa).

4Fe-4S ferredoxin-type domains follow at residues 53 to 83 (QRRY…IESE) and 93 to 122 (SRYD…ETHI). Residues cysteine 63, cysteine 66, cysteine 69, cysteine 73, cysteine 102, cysteine 105, cysteine 108, and cysteine 112 each coordinate [4Fe-4S] cluster.

This sequence belongs to the complex I 23 kDa subunit family. As to quaternary structure, NDH-1 is composed of 14 different subunits. Subunits NuoA, H, J, K, L, M, N constitute the membrane sector of the complex. The cofactor is [4Fe-4S] cluster.

It localises to the cell inner membrane. The enzyme catalyses a quinone + NADH + 5 H(+)(in) = a quinol + NAD(+) + 4 H(+)(out). In terms of biological role, NDH-1 shuttles electrons from NADH, via FMN and iron-sulfur (Fe-S) centers, to quinones in the respiratory chain. The immediate electron acceptor for the enzyme in this species is believed to be ubiquinone. Couples the redox reaction to proton translocation (for every two electrons transferred, four hydrogen ions are translocated across the cytoplasmic membrane), and thus conserves the redox energy in a proton gradient. The protein is NADH-quinone oxidoreductase subunit I of Chromobacterium violaceum (strain ATCC 12472 / DSM 30191 / JCM 1249 / CCUG 213 / NBRC 12614 / NCIMB 9131 / NCTC 9757 / MK).